The sequence spans 801 residues: Phenylalanine--tRNA ligase beta subunit (801 aa).

Positions 39 to 153 (AEGLSKLVVG…EGAIPGDSIF (115 aa)) constitute a tRNA-binding domain. Residues 406-481 (TEPVEVSTTL…RIYGYEKLPT (76 aa)) enclose the B5 domain. Mg(2+) contacts are provided by D459, D465, E468, and E469. Residues 708–801 (TKYPSVSRDI…LVEKVNAEIR (94 aa)) form the FDX-ACB domain.

The protein belongs to the phenylalanyl-tRNA synthetase beta subunit family. Type 1 subfamily. Tetramer of two alpha and two beta subunits. Mg(2+) serves as cofactor.

The protein localises to the cytoplasm. It carries out the reaction tRNA(Phe) + L-phenylalanine + ATP = L-phenylalanyl-tRNA(Phe) + AMP + diphosphate + H(+). The sequence is that of Phenylalanine--tRNA ligase beta subunit from Streptococcus agalactiae serotype V (strain ATCC BAA-611 / 2603 V/R).